A 329-amino-acid polypeptide reads, in one-letter code: Olfactory receptor 52L1 (329 aa).

Residues Met-1 to His-43 lie on the Extracellular side of the membrane. Residue Asn-20 is glycosylated (N-linked (GlcNAc...) asparagine). Residues Trp-44–Leu-64 traverse the membrane as a helical segment. Over Phe-65–Ser-72 the chain is Cytoplasmic. Residues Leu-73–Ser-93 traverse the membrane as a helical segment. Residues Ser-94–Ile-117 are Extracellular-facing. Cys-115 and Cys-207 are joined by a disulfide. Residues Gln-118 to Leu-138 form a helical membrane-spanning segment. Over Asp-139–Gly-157 the chain is Cytoplasmic. Residues Val-158–Pro-178 form a helical membrane-spanning segment. Residues Ile-179–Arg-214 are Extracellular-facing. A helical membrane pass occupies residues Ala-215 to Ser-235. Topologically, residues Tyr-236–Ala-255 are cytoplasmic. The chain crosses the membrane as a helical span at residues Phe-256 to Ser-276. Residues Phe-277 to His-291 lie on the Extracellular side of the membrane. A helical transmembrane segment spans residues Val-292–Val-312. At Lys-313 to Asp-329 the chain is on the cytoplasmic side.

This sequence belongs to the G-protein coupled receptor 1 family.

It localises to the cell membrane. Functionally, odorant receptor. In Homo sapiens (Human), this protein is Olfactory receptor 52L1 (OR52L1).